We begin with the raw amino-acid sequence, 436 residues long: Two-pore potassium channel 3 (436 aa).

The Cytoplasmic portion of the chain corresponds to 1-148 (MANEGSDPLL…QKDPTETSRS (148 aa)). The interval 62–117 (SHFIDSMKQPSPSSSSTAVNNPFSDSSTLDPLLPPPPPQPEPWLSDQTSSHCQGHA) is disordered. Over residues 71–92 (PSPSSSSTAVNNPFSDSSTLDP) the composition is skewed to low complexity. Positions 93 to 102 (LLPPPPPQPE) are enriched in pro residues. The chain crosses the membrane as a helical span at residues 149-169 (VVRQAFALLVVYLSLGVLIYW). The pore-forming intramembrane region spans 185 to 204 (DGLYFCIVTMCTIGYGDITP). The helical transmembrane segment at 212–232 (FSIMFVLVGFGFIDILLSGMV) threads the bilayer. The Cytoplasmic segment spans residues 233–274 (SYVLDLQESYMLDSAKRRDEPEKRRSYIIDVKKGRMRIRLKV). Residues 275 to 295 (ALALGVVVLCIAVGVGIMHFI) form a helical membrane-spanning segment. The pore-forming intramembrane region spans 302 to 321 (DSFYLSVMSVTTVGYGDRAF). A helical transmembrane segment spans residues 328 to 348 (LFAAIWLLVSTLAVARAFLYL). The Cytoplasmic portion of the chain corresponds to 349 to 436 (AEARVDKRNR…LDLLEGGSGD (88 aa)). EF-hand domains lie at 365–400 (LCET…EMEK) and 404–436 (KDIL…GSGD). Ca(2+) is bound by residues Asp-378, Asp-380, Asn-382, Cys-384, Glu-389, Asp-417, Asn-421, Lys-423, and Asp-428.

The protein belongs to the two pore domain potassium channel (TC 1.A.1.7) family. In terms of assembly, homodimer. Expressed in roots, cotyledons, stems, hypocotyls, leaves and flowers. Detected in root tips and in mesophyll cells and guard cells of the leaves.

The protein localises to the vacuole membrane. It localises to the plastid. It is found in the chloroplast thylakoid membrane. With respect to regulation, inhibited by barium, but not by tetraethylammonium. Its function is as follows. Two-pore potassium channel modulating the proton motive force (pmf) necessary to convert photochemical energy into physiological functions. Mediates the potassium efflux from the thylakoid lumen required for the regulation of the transmembrane electrical potential, the enhancement of the pH gradient for ATP synthesis, the regulation of electron flow, and pH-mediated photoprotective responses. Requires calcium for channel activity. This is Two-pore potassium channel 3 from Arabidopsis thaliana (Mouse-ear cress).